The sequence spans 194 residues: Transposon Tn2501 resolvase (194 aa).

A Resolvase/invertase-type recombinase catalytic domain is found at 3–143; sequence RVFAYCRVST…SGIARAKATG (141 aa). Catalysis depends on serine 11, which acts as the O-(5'-phospho-DNA)-serine intermediate. Residues 170-189 constitute a DNA-binding region (H-T-H motif); it reads ISAIAREFNTTRQTILRVKA.

Belongs to the site-specific recombinase resolvase family.

Functionally, resolvase catalyzes the resolution (a site-specific recombination) of the cointegrated replicon to yield the final transposition products. This Escherichia coli protein is Transposon Tn2501 resolvase (tnpR).